The primary structure comprises 267 residues: tRNA pseudouridine synthase A (267 aa).

Aspartate 55 serves as the catalytic Nucleophile. Residue tyrosine 111 coordinates substrate.

This sequence belongs to the tRNA pseudouridine synthase TruA family.

The enzyme catalyses uridine(38/39/40) in tRNA = pseudouridine(38/39/40) in tRNA. Its function is as follows. Formation of pseudouridine at positions 38, 39 and 40 in the anticodon stem and loop of transfer RNAs. The chain is tRNA pseudouridine synthase A from Thermococcus kodakarensis (strain ATCC BAA-918 / JCM 12380 / KOD1) (Pyrococcus kodakaraensis (strain KOD1)).